A 240-amino-acid polypeptide reads, in one-letter code: Phosphoribosylaminoimidazole-succinocarboxamide synthase (240 aa).

Belongs to the SAICAR synthetase family.

It carries out the reaction 5-amino-1-(5-phospho-D-ribosyl)imidazole-4-carboxylate + L-aspartate + ATP = (2S)-2-[5-amino-1-(5-phospho-beta-D-ribosyl)imidazole-4-carboxamido]succinate + ADP + phosphate + 2 H(+). The protein operates within purine metabolism; IMP biosynthesis via de novo pathway; 5-amino-1-(5-phospho-D-ribosyl)imidazole-4-carboxamide from 5-amino-1-(5-phospho-D-ribosyl)imidazole-4-carboxylate: step 1/2. The sequence is that of Phosphoribosylaminoimidazole-succinocarboxamide synthase from Coxiella burnetii (strain RSA 493 / Nine Mile phase I).